The primary structure comprises 179 residues: Large ribosomal subunit protein bL9 (179 aa).

Positions 155-179 (KPEEAPVPVAEEPTAETEQAEVAAE) are disordered. The span at 167 to 179 (PTAETEQAEVAAE) shows a compositional bias: acidic residues.

This sequence belongs to the bacterial ribosomal protein bL9 family.

Its function is as follows. Binds to the 23S rRNA. The protein is Large ribosomal subunit protein bL9 of Porphyromonas gingivalis (strain ATCC BAA-308 / W83).